A 1008-amino-acid chain; its full sequence is Probable pre-mRNA-splicing factor ATP-dependent RNA helicase mog-4 (1008 aa).

Disordered regions lie at residues 104 to 146 and 169 to 202; these read SSTK…SESD and NKKE…REES. Low complexity predominate over residues 127-137; that stretch reads KASKPGKSVKP. In terms of domain architecture, Helicase ATP-binding spans 374-538; the sequence is IEAVKEHQVL…FDDAPIFRIP (165 aa). 387-394 serves as a coordination point for ATP; sequence GETGSGKT. The short motif at 485 to 488 is the DEAH box element; that stretch reads DEAH. Residues 563-737 form the Helicase C-terminal domain; the sequence is TIMQIHLTQP…NVVLMLKSLG (175 aa). The segment at 988 to 1008 is disordered; sequence EDATNKKMPKNKGKSGKDLER.

It belongs to the DEAD box helicase family. DEAH subfamily. DDX16/PRP8 sub-subfamily. As to quaternary structure, interacts with mep-1 and smn-1.

It is found in the nucleus. The enzyme catalyses ATP + H2O = ADP + phosphate + H(+). Its function is as follows. ATP-binding RNA helicase involved in pre-mRNA splicing. Operates during embryogenesis. The sequence is that of Probable pre-mRNA-splicing factor ATP-dependent RNA helicase mog-4 (mog-4) from Caenorhabditis elegans.